Reading from the N-terminus, the 164-residue chain is C-phycoerythrin alpha chain (164 aa).

Residues Cys-82 and Cys-139 each contribute to the (2R,3E)-phycoerythrobilin site.

It belongs to the phycobiliprotein family. In terms of assembly, heterodimer of an alpha and a beta chain. Contains two covalently linked bilin chromophores.

Its subcellular location is the cellular thylakoid membrane. In terms of biological role, light-harvesting photosynthetic bile pigment-protein from the phycobiliprotein complex. The polypeptide is C-phycoerythrin alpha chain (cpeA) (Synechocystis sp. (strain PCC 6701)).